We begin with the raw amino-acid sequence, 98 residues long: Major carboxysome shell protein CsoS1A (98 aa).

Positions 8–93 (ALGMIETRGL…VHSEVENILP (86 aa)) constitute a BMC domain.

It belongs to the bacterial microcompartments protein family. CsoS1 subfamily. In terms of assembly, homohexamer with a small central pore; the concave side is mostly positive electrostatic potential, whereas the convex side is mostly negative electrostatic potential. Forms a CsoS2-CsoS1-RuBisCO complex. Interacts with the N-terminus (residues 1-136) of RuBisCO (CbbL).

It localises to the carboxysome. The major shell protein of the carboxysome, a polyhedral inclusion where RuBisCO (ribulose bisphosphate carboxylase, ccbL-ccbS) is sequestered. Assembles into hexamers which make sheets that form the facets of the polyhedral carboxysome. The shell probably limits the diffusion of CO(2) into and out of the carboxysome. Molecular modeling shows the central pore of this protein is selectively permeable to anions such as HCO(3) rather than CO(2) or O(2). There are estimated to be 2970 CsoS1A/CsoS1C proteins per carboxysome (the proteins differ by only 1 residue). In terms of biological role, unlike beta-carboxysomes, alpha-carboxysomes (Cb) can form without cargo protein. CsoS2 is essential for Cb formation and is also capable of targeting foreign proteins to the Cb. The Cb shell assembles with the aid of CsoS2; CsoS1A, CsoS1B and CsoS1C form the majority of the shell while CsoS4A and CsoS4B form vertices. CsoS1D forms pseudohexamers that probably control metabolite flux into and out of the shell. In Halothiobacillus neapolitanus (strain ATCC 23641 / c2) (Thiobacillus neapolitanus), this protein is Major carboxysome shell protein CsoS1A.